Reading from the N-terminus, the 67-residue chain is Phycobilisome 7.8 kDa linker polypeptide, allophycocyanin-associated, core (67 aa).

The CpcD-like domain occupies M1 to A56.

The protein belongs to the phycobilisome linker protein family.

It is found in the cellular thylakoid membrane. Functionally, rod linker protein, associated with allophycocyanin. Linker polypeptides determine the state of aggregation and the location of the disk-shaped phycobiliprotein units within the phycobilisome and modulate their spectroscopic properties in order to mediate a directed and optimal energy transfer. This is Phycobilisome 7.8 kDa linker polypeptide, allophycocyanin-associated, core (apcC) from Synechocystis sp. (strain ATCC 27184 / PCC 6803 / Kazusa).